The chain runs to 366 residues: tRNA/tmRNA (uracil-C(5))-methyltransferase (366 aa).

S-adenosyl-L-methionine is bound by residues Gln-190, Tyr-218, Asn-223, Glu-239, and Asp-299. Cys-324 acts as the Nucleophile in catalysis. Glu-358 acts as the Proton acceptor in catalysis.

The protein belongs to the class I-like SAM-binding methyltransferase superfamily. RNA M5U methyltransferase family. TrmA subfamily.

The enzyme catalyses uridine(54) in tRNA + S-adenosyl-L-methionine = 5-methyluridine(54) in tRNA + S-adenosyl-L-homocysteine + H(+). It catalyses the reaction uridine(341) in tmRNA + S-adenosyl-L-methionine = 5-methyluridine(341) in tmRNA + S-adenosyl-L-homocysteine + H(+). Functionally, dual-specificity methyltransferase that catalyzes the formation of 5-methyluridine at position 54 (m5U54) in all tRNAs, and that of position 341 (m5U341) in tmRNA (transfer-mRNA). This chain is tRNA/tmRNA (uracil-C(5))-methyltransferase, found in Salmonella newport (strain SL254).